Here is a 218-residue protein sequence, read N- to C-terminus: MGGKWSKMAGWSTVRERMRRAEPARERMRRAEPRAEPAADGVGAVSRDLEKHGAITSSNTAATNADCAWLEAQEDEEVGFPVKPQVPLRPMTYKAAVDLSHFLKEKGGLEGLIHSQQRQDILDLWVYHTQGYFPDWQNYTPGPGVRYPLTFGWCFKLVPVEPEKIEEANEGENNSLLHPMSQHGMDDPEREVLQWRFDSRLAFHHMARELHPEYYKNC.

The tract at residues 1 to 44 is disordered; that stretch reads MGGKWSKMAGWSTVRERMRRAEPARERMRRAEPRAEPAADGVGA. Gly-2 is lipidated: N-myristoyl glycine; by host. Position 6 is a phosphoserine; by host (Ser-6). Basic and acidic residues predominate over residues 14 to 37; sequence VRERMRRAEPARERMRRAEPRAEP. The tract at residues 74–77 is acidic; interacts with host PACS1 and PACS2; stabilizes the interaction of NEF/MHC-I with host AP1M1; necessary for MHC-I internalization; that stretch reads EDEE. Residues 81–90 are SH3-binding; interaction with Src family tyrosine kinases; sequence PVKPQVPLRP. A PxxP; stabilizes the interaction of NEF/MHC-I with host AP1M1; necessary for MHC-I internalization motif is present at residues 84–87; sequence PQVP. The segment at 120-136 is mediates dimerization, Nef-PTE1 interaction; it reads DILDLWVYHTQGYFPDW. The tract at residues 160 to 192 is binding to ATP6V1H; the sequence is VEPEKIEEANEGENNSLLHPMSQHGMDDPEREV. A Dileucine internalization motif; necessary for CD4 internalization motif is present at residues 176–177; that stretch reads LL. Positions 186 to 187 match the Diacidic; necessary for CD4 internalization motif; sequence DD.

Belongs to the lentivirus primate group Nef protein family. In terms of assembly, monomer; cytosolic form. Homodimer; membrane bound form. Interacts with Nef associated p21-activated kinase (PAK2); this interaction activates PAK2. Associates with the Nef-MHC-I-AP1 complex; this complex is required for MHC-I internalization. Interacts (via C-terminus) with host PI3-kinase. Interacts with host PACS1; this interaction seems to be weak. Interacts with host PACS2. Interacts with host LCK and MAPK3; these interactions inhibit the kinase activity of the latter. Interacts with host ATP6V1H; this interaction may play a role in CD4 endocytosis. Associates with the CD4-Nef-AP2 complex; this complex is required for CD4 internalization. Interacts with host AP2 subunit alpha and AP2 subunit sigma2. Interacts with TCR-zeta chain; this interaction up-regulates the Fas ligand (FasL) surface expression. Interacts with host HCK, LYN, and SRC; these interactions activate the Src family kinases. Interacts with MAP3K5; this interaction inhibits the Fas and TNFR-mediated death signals. Interacts with beta-COP and PTE1. Interacts with human RACK1; this increases Nef phosphorylation by PKC. Interacts with TP53; this interaction decreases the half-life of TP53, protecting the infected cell against p53-mediated apoptosis. The virion-associated Nef proteins are cleaved by the viral protease to release the soluble C-terminal core protein. Nef is probably cleaved concomitantly with viral structural proteins on maturation of virus particles. Post-translationally, myristoylated. In terms of processing, phosphorylated on serine residues, probably by host PKCdelta and theta.

It is found in the host cell membrane. Its subcellular location is the virion. The protein localises to the secreted. The protein resides in the host Golgi apparatus membrane. Its function is as follows. Factor of infectivity and pathogenicity, required for optimal virus replication. Alters numerous pathways of T-lymphocyte function and down-regulates immunity surface molecules in order to evade host defense and increase viral infectivity. Alters the functionality of other immunity cells, like dendritic cells, monocytes/macrophages and NK cells. In terms of biological role, in infected CD4(+) T-lymphocytes, down-regulates the surface MHC-I, mature MHC-II, CD4, CD28, CCR5 and CXCR4 molecules. Mediates internalization and degradation of host CD4 through the interaction of with the cytoplasmic tail of CD4, the recruitment of AP-2 (clathrin adapter protein complex 2), internalization through clathrin coated pits, and subsequent transport to endosomes and lysosomes for degradation. Diverts host MHC-I molecules to the trans-Golgi network-associated endosomal compartments by an endocytic pathway to finally target them for degradation. MHC-I down-regulation may involve AP-1 (clathrin adapter protein complex 1) or possibly Src family kinase-ZAP70/Syk-PI3K cascade recruited by PACS2. In consequence infected cells are masked for immune recognition by cytotoxic T-lymphocytes. Decreasing the number of immune receptors also prevents reinfection by more HIV particles (superinfection). Down-regulates host SERINC3 and SERINC5 thereby excluding these proteins from the viral particles. Virion infectivity is drastically higher when SERINC3 or SERINC5 are excluded from the viral envelope, because these host antiviral proteins impair the membrane fusion event necessary for subsequent virion penetration. Bypasses host T-cell signaling by inducing a transcriptional program nearly identical to that of anti-CD3 cell activation. Interaction with TCR-zeta chain up-regulates the Fas ligand (FasL). Increasing surface FasL molecules and decreasing surface MHC-I molecules on infected CD4(+) cells send attacking cytotoxic CD8+ T-lymphocytes into apoptosis. Functionally, plays a role in optimizing the host cell environment for viral replication without causing cell death by apoptosis. Protects the infected cells from apoptosis in order to keep them alive until the next virus generation is ready to strike. Inhibits the Fas and TNFR-mediated death signals by blocking MAP3K5/ASK1. Decreases the half-life of TP53, protecting the infected cell against p53-mediated apoptosis. Inhibits the apoptotic signals regulated by the Bcl-2 family proteins through the formation of a Nef/PI3-kinase/PAK2 complex that leads to activation of PAK2 and induces phosphorylation of host BAD. Its function is as follows. Extracellular Nef protein targets CD4(+) T-lymphocytes for apoptosis by interacting with CXCR4 surface receptors. This chain is Protein Nef, found in Homo sapiens (Human).